A 415-amino-acid polypeptide reads, in one-letter code: Gamma-glutamyl phosphate reductase (415 aa).

Belongs to the gamma-glutamyl phosphate reductase family.

It localises to the cytoplasm. The catalysed reaction is L-glutamate 5-semialdehyde + phosphate + NADP(+) = L-glutamyl 5-phosphate + NADPH + H(+). It participates in amino-acid biosynthesis; L-proline biosynthesis; L-glutamate 5-semialdehyde from L-glutamate: step 2/2. Catalyzes the NADPH-dependent reduction of L-glutamate 5-phosphate into L-glutamate 5-semialdehyde and phosphate. The product spontaneously undergoes cyclization to form 1-pyrroline-5-carboxylate. The sequence is that of Gamma-glutamyl phosphate reductase from Clostridium perfringens (strain SM101 / Type A).